The primary structure comprises 190 residues: Xanthine phosphoribosyltransferase (190 aa).

L20 and N27 together coordinate xanthine. 128–132 (ANGKA) is a 5-phospho-alpha-D-ribose 1-diphosphate binding site. Position 156 (K156) interacts with xanthine.

Belongs to the purine/pyrimidine phosphoribosyltransferase family. Xpt subfamily. Homodimer.

It is found in the cytoplasm. The catalysed reaction is XMP + diphosphate = xanthine + 5-phospho-alpha-D-ribose 1-diphosphate. It functions in the pathway purine metabolism; XMP biosynthesis via salvage pathway; XMP from xanthine: step 1/1. Functionally, converts the preformed base xanthine, a product of nucleic acid breakdown, to xanthosine 5'-monophosphate (XMP), so it can be reused for RNA or DNA synthesis. The chain is Xanthine phosphoribosyltransferase from Ruminiclostridium cellulolyticum (strain ATCC 35319 / DSM 5812 / JCM 6584 / H10) (Clostridium cellulolyticum).